A 648-amino-acid chain; its full sequence is MEKKVEYIKENDKIVLMCNYGFRDMTLNLLKCFEKLSIDKSRYILYCMDDKAYQFFAEFKGIECQRFSRDDIINSSTSSTQLFHDNNTNDNKGIYSENAESYGDIGFRAICNEKPLVVLDVLKKGYNVLWTDTDIVWKRDPFIHFYQDINQENQFTNDDDIDLYVQQDDDDICAGFYFIRSNQRTIKFIQDSINFLNPCIDDQIAMRLFLKSQGINIKSKNILLSLSENDKKDKIRYRLLDKKLFPNGTNYFNLKITQRDNITPFIIHNNCIIGHRSKKDRFIEYGLWYINDDEIDINSNINNDDENNKEIKLFKNVLKNHTDIITSINSSDDGKLFTTSIDKSIKIWKFENTSGNDTDNGIFKVLKSKYIHKRGGIWSTFIFSSNNNNNNDYGFENLLTSSHDKTIQYWDNNLQVIQTFIGHTGIINQLIVIPNSSYFFTCSDDNTIRQFDLNNINFKRVFIGHNGWVSSIAINKNLNTLYSCSNDGTIRFWDINSGRCLNIIKGNQGGWIRKIIYNDNLNQLISGGNDGTIKIWSCDNLNNFNDNQYLLKINTNENSSINDLQFDSDTNLIYCAFENGSLKSFKLTSNNNNNNNNNNNNNNNTINYSLDKVYQGHLNSSINCIHISKSLNLLFSGGFDKQIKSWDL.

7 WD repeats span residues 320 to 358 (NHTD…GNDT), 372 to 420 (HKRG…IQTF), 422 to 461 (GHTG…FKRV), 464 to 505 (GHNG…NIIK), 507 to 546 (NQGG…NFND), 556 to 595 (NENS…NNNN), and 617 to 648 (HLNS…SWDL).

It belongs to the glycosyltransferase 77 family. It depends on Mn(2+) as a cofactor.

The protein localises to the cytoplasm. It carries out the reaction an alpha-L-fucosyl-(1-&gt;2)-beta-D-galactosyl derivative + UDP-alpha-D-galactose = an alpha-D-galactosyl-(1-&gt;3)-[alpha-L-fucosyl-(1-&gt;2)]-beta-D-galactosyl derivative + UDP + H(+). Its pathway is protein modification; protein glycosylation. Stimulated by dithiothreitol (DTT) in vitro. Totally inhibited by EDTA. Its function is as follows. Specifically catalyzes the transfer of a galactosyl residue to the hydroxyproline-linked saccharide on Skp1 protein (fpaA/fpaB). Catalyzes the formation of a Gal-alpha-1,3-Fuc linkage, leading to Gal-Fuc-Gal-GlcNAc-HyPro143-Skp1. The chain is UDP-galactose:fucoside alpha-3-galactosyltransferase (agtA) from Dictyostelium discoideum (Social amoeba).